We begin with the raw amino-acid sequence, 215 residues long: uncharacterized protein (215 aa).

A signal peptide spans 1 to 29 (MDKVQSGFLILFLFLMECQLHLCLPYADG). The Extracellular segment spans residues 30–100 (LHPTGNITGL…IIRHRPALVK (71 aa)). Residues 101–121 (VILISSVAFSIALICGMAISY) form a helical membrane-spanning segment. The Cytoplasmic segment spans residues 122–215 (MIYRLAQAEE…ASHNGKMEDL (94 aa)). The interval 191–215 (LKEEQNSVTENKTKNASHNGKMEDL) is disordered. Polar residues predominate over residues 196-208 (NSVTENKTKNASH).

The protein localises to the membrane. This is an uncharacterized protein from Homo sapiens (Human).